A 335-amino-acid chain; its full sequence is HTH-type transcriptional regulator LacR (335 aa).

Positions M1 to P58 constitute an HTH lacI-type domain. Positions I4 to N23 form a DNA-binding region, H-T-H motif.

It functions in the pathway carbohydrate metabolism; lactose degradation [regulation]. Negatively regulates the transcription of the lactose utilization genes lacL and lacM. This Lactobacillus helveticus (Lactobacillus suntoryeus) protein is HTH-type transcriptional regulator LacR (lacR).